We begin with the raw amino-acid sequence, 245 residues long: tRNA (guanine-N(1)-)-methyltransferase (245 aa).

Residues Gly111 and 131–136 (MGDYVL) each bind S-adenosyl-L-methionine.

It belongs to the RNA methyltransferase TrmD family. In terms of assembly, homodimer.

It localises to the cytoplasm. The enzyme catalyses guanosine(37) in tRNA + S-adenosyl-L-methionine = N(1)-methylguanosine(37) in tRNA + S-adenosyl-L-homocysteine + H(+). Its function is as follows. Specifically methylates guanosine-37 in various tRNAs. This chain is tRNA (guanine-N(1)-)-methyltransferase, found in Staphylococcus aureus (strain MRSA252).